The following is a 679-amino-acid chain: MTKDLLLELGLEELPAYVVTPSEKQLGQKMVKFLEDHRLSFETVQTFSTPRRLAVRVKGLADQQTDLTEDFKGPSKKIALDAEGNFSKAAQGFVRGKGLSVDDIEFREVKGEEYVYVTKHETGKSAIDVLASVTEVLTELTFPVNMHWANNSFEYIRPVHTLVVLLDDQALELDFLDIHSGRISRGHRFLGSDTEILSASSYEDDLRQQFVIADAKERQQMIVDQIHAIEEKENISVEIDEDLLNEVLNLVEYPTAFLGSFDEKYLDVPEEVLVTSMKNHQRYFVVRDRDGKLLPNFISVRNGNAEHIENVIKGNEKVLVARLEDGEFFWQEDQKLNIADLVEKLKQVTFHEKIGSLYEHMDRVKVISQYLAEKADLSDEEKLAVLRAASIYKFDLLTGMVDEFDELQGIMGEKYALLAGEQPAVAAAIREHYMPTSADGELPETRVGAILALADKFDTLLSFFSVGLIPSGSNDPYALRRATQGIVRILEAFGWDIPLDELVTNLYGLSFASLDYANQKEVMAFISARIEKMIGSKVPKDIREAVLESDTYIVSLILEASQALVQKSKDAQYKVSIESLSRAFNLAEKVTHSVSVDYSLFENNQEKALYQAILSLELTEDMHDNLDKLFALSPIINDFFDNTMVMTDDEKMKQNRLALLNSLVAKARTVAAFNLLNTK.

This sequence belongs to the class-II aminoacyl-tRNA synthetase family. In terms of assembly, tetramer of two alpha and two beta subunits.

It localises to the cytoplasm. It carries out the reaction tRNA(Gly) + glycine + ATP = glycyl-tRNA(Gly) + AMP + diphosphate. This Streptococcus agalactiae serotype III (strain NEM316) protein is Glycine--tRNA ligase beta subunit.